A 606-amino-acid polypeptide reads, in one-letter code: Pescadillo homolog (606 aa).

The BRCT domain maps to 346-447; the sequence is LSTSLFSPYT…KILLEGPYGQ (102 aa). Residues 461 to 497 are disordered; it reads YEGAYDPAAGPLGPSGVEQESESEADEVSEEDEEDQG. Acidic residues predominate over residues 479 to 496; sequence QESESEADEVSEEDEEDQ.

This sequence belongs to the pescadillo family. Component of the NOP7 complex, composed of ERB1, NOP7 and YTM1. The complex is held together by ERB1, which interacts with NOP7 via its N-terminal domain and with YTM1 via a high-affinity interaction between the seven-bladed beta-propeller domains of the 2 proteins. The NOP7 complex associates with the 66S pre-ribosome.

The protein resides in the nucleus. It is found in the nucleolus. Its subcellular location is the nucleoplasm. Functionally, component of the NOP7 complex, which is required for maturation of the 25S and 5.8S ribosomal RNAs and formation of the 60S ribosome. This Laccaria bicolor (strain S238N-H82 / ATCC MYA-4686) (Bicoloured deceiver) protein is Pescadillo homolog.